The sequence spans 99 residues: Acylphosphatase-2 (99 aa).

Residue serine 2 is modified to N-acetylserine. The 91-residue stretch at 9–99 folds into the Acylphosphatase-like domain; it reads SVDYEVFGRV…LEYSSFNIRY (91 aa). Catalysis depends on residues arginine 24 and asparagine 42. A Phosphoserine modification is found at serine 93.

It belongs to the acylphosphatase family.

The enzyme catalyses an acyl phosphate + H2O = a carboxylate + phosphate + H(+). In terms of biological role, its physiological role is not yet clear. The protein is Acylphosphatase-2 (ACYP2) of Bos taurus (Bovine).